The primary structure comprises 239 residues: Protein canopy homolog 4 (239 aa).

Residues 1–20 form the signal peptide; that stretch reads MGPVRLGTLLFILTVYGAWA. 3 cysteine pairs are disulfide-bonded: C37-C195, C40-C183, and C93-C155. Positions 199–239 are disordered; it reads TWTGKEKITDGQEKTEEEEQDQEEEEMTNTPVHSQHDPEDL. Residues 201–212 are compositionally biased toward basic and acidic residues; that stretch reads TGKEKITDGQEK. The segment covering 213–225 has biased composition (acidic residues); that stretch reads TEEEEQDQEEEEM.

Belongs to the canopy family. In terms of assembly, interacts with TLR4.

It localises to the secreted. Functionally, plays a role in the regulation of the cell surface expression of TLR4. In Bos taurus (Bovine), this protein is Protein canopy homolog 4 (CNPY4).